Reading from the N-terminus, the 736-residue chain is Zinc finger CCCH domain-containing protein 14 (736 aa).

N-acetylmethionine is present on M1. 2 stretches are compositionally biased toward polar residues: residues 78-103 (TEPS…SNFS) and 131-145 (VSTS…NVRQ). Positions 78–146 (TEPSSLKSSD…ESKTTNVRQT (69 aa)) are disordered. S85 carries the phosphoserine modification. Glycyl lysine isopeptide (Lys-Gly) (interchain with G-Cter in SUMO2) cross-links involve residues K99, K139, K175, and K198. Residue S240 is modified to Phosphoserine. K245 is covalently cross-linked (Glycyl lysine isopeptide (Lys-Gly) (interchain with G-Cter in SUMO2)). The residue at position 281 (S281) is a Phosphoserine. Residues K283 and K295 each participate in a glycyl lysine isopeptide (Lys-Gly) (interchain with G-Cter in SUMO2) cross-link. Residues 310–350 (HDGEEEEEDDDYGSRTGSISSSVSVPAKPERRPSLPPSKQA) are disordered. Phosphoserine occurs at positions 327 and 343. Position 357 is an N6-acetyllysine; alternate (K357). Residue K357 forms a Glycyl lysine isopeptide (Lys-Gly) (interchain with G-Cter in SUMO2); alternate linkage. A Glycyl lysine isopeptide (Lys-Gly) (interchain with G-Cter in SUMO2) cross-link involves residue K378. S390 and S409 each carry phosphoserine. The interval 398–430 (VVQGQSRTPRISPPIKEEETKGDSVEKNQGTQQ) is disordered. A compositionally biased stretch (basic and acidic residues) spans 412 to 423 (IKEEETKGDSVE). Residue K413 forms a Glycyl lysine isopeptide (Lys-Gly) (interchain with G-Cter in SUMO2) linkage. S421 bears the Phosphoserine mark. Residue K489 forms a Glycyl lysine isopeptide (Lys-Gly) (interchain with G-Cter in SUMO2) linkage. Residues S498, S515, S527, and S620 each carry the phosphoserine modification. C3H1-type zinc fingers lie at residues 595 to 620 (EKLL…HPIS), 621 to 640 (PCKA…VHPN), 641 to 656 (CKYD…PFTH), 682 to 699 (CRYF…YHPK), and 701 to 719 (CRFN…HPTI).

It belongs to the ZC3H14 family. As to quaternary structure, homodimer; facilitating circular RNAs (circRNAs) formation. Associates with the spliceosome. Interacts with HOOK2. Interacts with ZFC3H1 in a RNase-sensitive manner.

The protein resides in the nucleus speckle. Functionally, RNA-binding protein involved in the biogenesis of circular RNAs (circRNAs), which are produced by back-splicing circularization of pre-mRNAs. Acts by binding to both exon-intron boundary and 3'-UTR of pre-mRNAs to promote circRNA biogenesis through dimerization and the association with the spliceosome. Required for spermatogenesis via involvement in circRNA biogenesis. Regulates the pre-mRNA processing of ATP5MC1; preventing its degradation. Also binds the poly(A) tail of mRNAs; controlling poly(A) length in neuronal cells. This Macaca fascicularis (Crab-eating macaque) protein is Zinc finger CCCH domain-containing protein 14 (ZC3H14).